The chain runs to 291 residues: Heterogeneous nuclear ribonucleoprotein D-like-B (291 aa).

RRM domains are found at residues 34–116 (SKMF…QGKE) and 119–196 (KKVF…AAQP). The interval 196–226 (PKEVYRQQQQKQQKGGRGGTRGRGRGQGYSN) is disordered. Gly residues predominate over residues 210–222 (GGRGGTRGRGRGQ).

Its subcellular location is the nucleus. The protein resides in the cytoplasm. Functionally, acts as a transcriptional regulator. Binds DNA and RNA. This Xenopus laevis (African clawed frog) protein is Heterogeneous nuclear ribonucleoprotein D-like-B (hnrnpdl-b).